The following is a 437-amino-acid chain: GTPase Era, mitochondrial (437 aa).

Residues 1–43 constitute a mitochondrion transit peptide; it reads MAASSWRGAVLLRTVSGLWQAGPDAAREWMTRLPSLLGFQQRC. The region spanning 112–330 is the Era-type G domain; that stretch reads RVLRVVLLGA…QYLLAQARPG (219 aa). Residues 120-127 form a G1 region; the sequence is GAPNAGKS. Position 120 to 127 (120 to 127) interacts with GTP; it reads GAPNAGKS. The interval 146 to 150 is G2; it reads HTTRS. The interval 167 to 170 is G3; it reads DTPG. 167–171 is a GTP binding site; sequence DTPGL. Ser-173 is modified (phosphoserine). 236–239 is a GTP binding site; that stretch reads NKVD. Residues 236 to 239 form a G4 region; that stretch reads NKVD. Positions 264–296 are disordered; that stretch reads LKTKQALRSRPDTHCPSPAAQGPNPQPVRDPQQ. Residues 308–310 are G5; that stretch reads LSA. The KH type-2 domain maps to 360–437; that stretch reads LPEEVPYNVQ…QLRLSVKLLK (78 aa).

It belongs to the TRAFAC class TrmE-Era-EngA-EngB-Septin-like GTPase superfamily. Era GTPase family.

Its subcellular location is the mitochondrion matrix. The protein resides in the mitochondrion inner membrane. In terms of biological role, probable GTPase that plays a role in the mitochondrial ribosomal small subunit assembly. Specifically binds the 12S mitochondrial rRNA (12S mt-rRNA) to a 33 nucleotide section delineating the 3' terminal stem-loop region. May act as a chaperone that protects the 12S mt-rRNA on the 28S mitoribosomal subunit during ribosomal small subunit assembly. The polypeptide is GTPase Era, mitochondrial (ERAL1) (Bos taurus (Bovine)).